The sequence spans 567 residues: Hydrogenase-2 large chain (567 aa).

The Ni(2+) site is built by cysteine 61, cysteine 64, cysteine 546, and cysteine 549. The propeptide occupies 553-567; that stretch reads VVDADGNEVVSVKVL.

This sequence belongs to the [NiFe]/[NiFeSe] hydrogenase large subunit family. In terms of assembly, heterodimer of a large and a small subunit. The cofactor is Ni(2+).

Its subcellular location is the cell membrane. It carries out the reaction H2 + A = AH2. In terms of biological role, this is one of three E.coli hydrogenases synthesized in response to different physiological conditions. HYD2 is involved in hydrogen uptake. The sequence is that of Hydrogenase-2 large chain (hybC) from Escherichia coli O157:H7.